We begin with the raw amino-acid sequence, 154 residues long: Interleukin-2 (154 aa).

The first 20 residues, M1–G20, serve as a signal peptide directing secretion. An O-linked (GalNAc...) threonine glycan is attached at T23. A disulfide bridge connects residues C78 and C126.

Belongs to the IL-2 family.

It is found in the secreted. Functionally, cytokine produced by activated CD4-positive helper T-cells and to a lesser extend activated CD8-positive T-cells and natural killer (NK) cells that plays pivotal roles in the immune response and tolerance. Binds to a receptor complex composed of either the high-affinity trimeric IL-2R (IL2RA/CD25, IL2RB/CD122 and IL2RG/CD132) or the low-affinity dimeric IL-2R (IL2RB and IL2RG). Interaction with the receptor leads to oligomerization and conformation changes in the IL-2R subunits resulting in downstream signaling starting with phosphorylation of JAK1 and JAK3. In turn, JAK1 and JAK3 phosphorylate the receptor to form a docking site leading to the phosphorylation of several substrates including STAT5. This process leads to activation of several pathways including STAT, phosphoinositide-3-kinase/PI3K and mitogen-activated protein kinase/MAPK pathways. Functions as a T-cell growth factor and can increase NK-cell cytolytic activity as well. Promotes strong proliferation of activated B-cells and subsequently immunoglobulin production. Plays a pivotal role in regulating the adaptive immune system by controlling the survival and proliferation of regulatory T-cells, which are required for the maintenance of immune tolerance. Moreover, participates in the differentiation and homeostasis of effector T-cell subsets, including Th1, Th2, Th17 as well as memory CD8-positive T-cells. This Sus scrofa (Pig) protein is Interleukin-2 (IL2).